The primary structure comprises 425 residues: Histidine--tRNA ligase (425 aa).

This sequence belongs to the class-II aminoacyl-tRNA synthetase family. As to quaternary structure, homodimer.

The protein resides in the cytoplasm. It carries out the reaction tRNA(His) + L-histidine + ATP = L-histidyl-tRNA(His) + AMP + diphosphate + H(+). The chain is Histidine--tRNA ligase from Shewanella sp. (strain MR-4).